Reading from the N-terminus, the 129-residue chain is Large ribosomal subunit protein bL19 (129 aa).

The protein belongs to the bacterial ribosomal protein bL19 family.

This protein is located at the 30S-50S ribosomal subunit interface and may play a role in the structure and function of the aminoacyl-tRNA binding site. The polypeptide is Large ribosomal subunit protein bL19 (Paraburkholderia phytofirmans (strain DSM 17436 / LMG 22146 / PsJN) (Burkholderia phytofirmans)).